A 290-amino-acid polypeptide reads, in one-letter code: 4-hydroxybenzoate octaprenyltransferase (290 aa).

Helical transmembrane passes span Leu-33 to Val-53, Leu-99 to Ile-119, Leu-141 to Val-161, Leu-213 to Asn-233, Gly-234 to Gln-254, and Ala-268 to Leu-288.

The protein belongs to the UbiA prenyltransferase family. Requires Mg(2+) as cofactor.

The protein resides in the cell inner membrane. It catalyses the reaction all-trans-octaprenyl diphosphate + 4-hydroxybenzoate = 4-hydroxy-3-(all-trans-octaprenyl)benzoate + diphosphate. The protein operates within cofactor biosynthesis; ubiquinone biosynthesis. Catalyzes the prenylation of para-hydroxybenzoate (PHB) with an all-trans polyprenyl group. Mediates the second step in the final reaction sequence of ubiquinone-8 (UQ-8) biosynthesis, which is the condensation of the polyisoprenoid side chain with PHB, generating the first membrane-bound Q intermediate 3-octaprenyl-4-hydroxybenzoate. In Cronobacter sakazakii (strain ATCC BAA-894) (Enterobacter sakazakii), this protein is 4-hydroxybenzoate octaprenyltransferase.